The primary structure comprises 171 residues: Adenine phosphoribosyltransferase (171 aa).

The protein belongs to the purine/pyrimidine phosphoribosyltransferase family. Homodimer.

The protein localises to the cytoplasm. It carries out the reaction AMP + diphosphate = 5-phospho-alpha-D-ribose 1-diphosphate + adenine. It functions in the pathway purine metabolism; AMP biosynthesis via salvage pathway; AMP from adenine: step 1/1. In terms of biological role, catalyzes a salvage reaction resulting in the formation of AMP, that is energically less costly than de novo synthesis. This chain is Adenine phosphoribosyltransferase, found in Natranaerobius thermophilus (strain ATCC BAA-1301 / DSM 18059 / JW/NM-WN-LF).